The following is a 120-amino-acid chain: Large ribosomal subunit protein uL18 (120 aa).

Belongs to the universal ribosomal protein uL18 family. As to quaternary structure, part of the 50S ribosomal subunit; part of the 5S rRNA/L5/L18/L25 subcomplex. Contacts the 5S and 23S rRNAs.

In terms of biological role, this is one of the proteins that bind and probably mediate the attachment of the 5S RNA into the large ribosomal subunit, where it forms part of the central protuberance. The polypeptide is Large ribosomal subunit protein uL18 (Methylocella silvestris (strain DSM 15510 / CIP 108128 / LMG 27833 / NCIMB 13906 / BL2)).